The chain runs to 509 residues: L-aspartate oxidase (509 aa).

FAD contacts are provided by residues Ser12–Ala15, Lys34, Asn41–Gly48, and Asp201. The Proton donor/acceptor role is filled by Arg262. FAD is bound by residues Glu341 and Ser357 to Leu358.

It belongs to the FAD-dependent oxidoreductase 2 family. NadB subfamily. It depends on FAD as a cofactor.

It is found in the cytoplasm. It catalyses the reaction L-aspartate + O2 = iminosuccinate + H2O2. Its pathway is cofactor biosynthesis; NAD(+) biosynthesis; iminoaspartate from L-aspartate (oxidase route): step 1/1. In terms of biological role, catalyzes the oxidation of L-aspartate to iminoaspartate, the first step in the de novo biosynthesis of NAD(+). In Halalkalibacterium halodurans (strain ATCC BAA-125 / DSM 18197 / FERM 7344 / JCM 9153 / C-125) (Bacillus halodurans), this protein is L-aspartate oxidase (nadB).